We begin with the raw amino-acid sequence, 462 residues long: uncharacterized protein (462 aa).

The next 2 helical transmembrane spans lie at 12–32 (WWWLTFGCARTVTVGFVAPTV) and 257–277 (GLCVDLLVCVLLLALLLLELV).

This sequence belongs to the HHV-5 US29 protein family.

The protein resides in the host membrane. This is an uncharacterized protein from Human cytomegalovirus (strain AD169) (HHV-5).